A 254-amino-acid chain; its full sequence is Thiazole synthase (254 aa).

The Schiff-base intermediate with DXP role is filled by Lys96. 1-deoxy-D-xylulose 5-phosphate is bound by residues Gly157, 183 to 184, and 205 to 206; these read AG and NT.

Belongs to the ThiG family. As to quaternary structure, homotetramer. Forms heterodimers with either ThiH or ThiS.

The protein localises to the cytoplasm. It carries out the reaction [ThiS sulfur-carrier protein]-C-terminal-Gly-aminoethanethioate + 2-iminoacetate + 1-deoxy-D-xylulose 5-phosphate = [ThiS sulfur-carrier protein]-C-terminal Gly-Gly + 2-[(2R,5Z)-2-carboxy-4-methylthiazol-5(2H)-ylidene]ethyl phosphate + 2 H2O + H(+). The protein operates within cofactor biosynthesis; thiamine diphosphate biosynthesis. Catalyzes the rearrangement of 1-deoxy-D-xylulose 5-phosphate (DXP) to produce the thiazole phosphate moiety of thiamine. Sulfur is provided by the thiocarboxylate moiety of the carrier protein ThiS. In vitro, sulfur can be provided by H(2)S. The chain is Thiazole synthase from Clostridium kluyveri (strain ATCC 8527 / DSM 555 / NBRC 12016 / NCIMB 10680 / K1).